The chain runs to 375 residues: Chaperone protein DnaJ (375 aa).

Residues D6 to G71 form the J domain. A CR-type zinc finger spans residues G138–K220. Zn(2+) contacts are provided by C151, C154, C168, C171, C194, C197, C208, and C211. CXXCXGXG motif repeat units follow at residues C151–G158, C168–G175, C194–G201, and C208–G215.

It belongs to the DnaJ family. In terms of assembly, homodimer. Zn(2+) serves as cofactor.

The protein localises to the cytoplasm. Functionally, participates actively in the response to hyperosmotic and heat shock by preventing the aggregation of stress-denatured proteins and by disaggregating proteins, also in an autonomous, DnaK-independent fashion. Unfolded proteins bind initially to DnaJ; upon interaction with the DnaJ-bound protein, DnaK hydrolyzes its bound ATP, resulting in the formation of a stable complex. GrpE releases ADP from DnaK; ATP binding to DnaK triggers the release of the substrate protein, thus completing the reaction cycle. Several rounds of ATP-dependent interactions between DnaJ, DnaK and GrpE are required for fully efficient folding. Also involved, together with DnaK and GrpE, in the DNA replication of plasmids through activation of initiation proteins. This chain is Chaperone protein DnaJ, found in Lachnospira eligens (strain ATCC 27750 / DSM 3376 / VPI C15-48 / C15-B4) (Eubacterium eligens).